A 732-amino-acid polypeptide reads, in one-letter code: uncharacterized protein (732 aa).

2 disordered regions span residues 38 to 90 (TTLA…NNNK) and 226 to 629 (EESP…MDYQ). Over residues 47–56 (QQQQQQQQQQ) the composition is skewed to low complexity. Residues 57-76 (PPSSSTTKEGGATTTQDNKL) are compositionally biased toward polar residues. 3 stretches are compositionally biased toward low complexity: residues 77-89 (TANG…NNNN), 231-247 (TTTT…TTAA), and 254-318 (TTTT…GTNS). Residues 327–338 (KAKKGVPKKAPT) show a composition bias toward basic residues. 3 stretches are compositionally biased toward low complexity: residues 339 to 383 (KKQP…APKT), 401 to 421 (KTSK…STTK), and 487 to 523 (SAST…IKSK). Over residues 553–566 (AAAEEQEEEEEEDN) the composition is skewed to acidic residues. 2 stretches are compositionally biased toward low complexity: residues 567-577 (SNGIQNNNSSN) and 593-609 (DNFS…NGLL). Residues 610–621 (SEDDDDDDDDDN) are compositionally biased toward acidic residues.

This is an uncharacterized protein from Dictyostelium discoideum (Social amoeba).